The following is a 435-amino-acid chain: Glutamyl-tRNA reductase (435 aa).

Residues 49-52, serine 109, 114-116, and glutamine 120 contribute to the substrate site; these read TCNR and ETQ. The active-site Nucleophile is the cysteine 50. 189-194 contributes to the NADP(+) binding site; it reads GAGEMS.

It belongs to the glutamyl-tRNA reductase family. As to quaternary structure, homodimer.

It catalyses the reaction (S)-4-amino-5-oxopentanoate + tRNA(Glu) + NADP(+) = L-glutamyl-tRNA(Glu) + NADPH + H(+). It participates in porphyrin-containing compound metabolism; protoporphyrin-IX biosynthesis; 5-aminolevulinate from L-glutamyl-tRNA(Glu): step 1/2. In terms of biological role, catalyzes the NADPH-dependent reduction of glutamyl-tRNA(Glu) to glutamate 1-semialdehyde (GSA). The sequence is that of Glutamyl-tRNA reductase from Listeria monocytogenes serovar 1/2a (strain ATCC BAA-679 / EGD-e).